A 446-amino-acid chain; its full sequence is MAENLDISELSPIHPAIISRQATINIGTIGHVAHGKSTVVKAISGVHTVRFKNELERNITIKLGYANAKIYKCSNEECPRPGCYRSYSSNKEDHPPCEICNSPMNLVRHVSFVDCPGHDILMATMLNGAAVMDAALLLIAGNESCPQPQTSEHLAAIEIMQLKHIIILQNKVDLIRESAAEEHYQSILKFIKGTVAENSPIVPISAQLKYNIDAILEYIVKKIPIPVRDFTTAPRLIVIRSFDVNKPGAEVDDLKGGVAGGSILTGVLRLNDEIEIRPGIVTKDDDGRIRCQPIFSRIISLFAEHNDLKIAVPGGLIGVGTTVDPTLCRADRLVGQVLGSKGNLPEVYTELEINYFLLRRLLGVKSGDKNTTKVQKLAKNEVLMVNIGSTSTGGRVMMVKADMAKILLTAPACTEIGEKVALSRRIEKHWRLIGWAKVVEGKTLKV.

The tr-type G domain maps to 21–227; sequence QATINIGTIG…YIVKKIPIPV (207 aa). Residues 30-37 form a G1 region; it reads GHVAHGKS. GTP is bound at residue 33 to 38; the sequence is AHGKST. Positions 58-62 are G2; sequence NITIK. Residues 114-117 are G3; that stretch reads DCPG. GTP contacts are provided by residues 170-173 and 205-207; these read NKVD and SAQ. Residues 170–173 form a G4 region; the sequence is NKVD. The interval 205 to 207 is G5; that stretch reads SAQ. The interval 436-446 is interacts with cdc123; that stretch reads AKVVEGKTLKV.

The protein belongs to the TRAFAC class translation factor GTPase superfamily. Classic translation factor GTPase family. EIF2G subfamily. Eukaryotic translation initiation factor 2 eIF2 is a heterotrimeric complex composed of an alpha, a beta and a gamma subunit. The factors eIF-1, eIF-2, eIF-3, TIF5/eIF-5 and methionyl-tRNAi form a multifactor complex (MFC) that may bind to the 40S ribosome. Interacts with cdc123; the interaction is direct.

It localises to the cytoplasm. Its subcellular location is the cytosol. The enzyme catalyses GTP + H2O = GDP + phosphate + H(+). As a subunit of eukaryotic initiation factor 2 eIF2, involved in the early steps of protein synthesis. In the presence of GTP, eIF-2 forms a ternary complex with initiator tRNA Met-tRNAi and then recruits the 40S ribosomal complex and initiation factors eIF-1, eIF-1A and eIF-3 to form the 43S pre-initiation complex (43S PIC), a step that determines the rate of protein translation. The 43S PIC binds to mRNA and scans downstream to the initiation codon, where it forms a 48S initiation complex by codon-anticodon base pairing. This leads to the displacement of eIF-1 to allow GTPase-activating protein (GAP) eIF-5-mediated hydrolysis of eIF2-bound GTP. Hydrolysis of GTP and release of Pi, which makes GTP hydrolysis irreversible, causes the release of the eIF-2-GDP binary complex from the 40S subunit, an event that is essential for the subsequent joining of the 60S ribosomal subunit to form an elongation-competent 80S ribosome. In order for eIF-2 to recycle and catalyze another round of initiation, the GDP bound to eIF-2 must be exchanged with GTP by way of a reaction catalyzed by GDP-GTP exchange factor (GEF) eIF-2B. The protein is Eukaryotic translation initiation factor 2 subunit gamma (tif213) of Schizosaccharomyces pombe (strain 972 / ATCC 24843) (Fission yeast).